A 554-amino-acid polypeptide reads, in one-letter code: Zinc finger protein syd-9 (554 aa).

C2H2-type zinc fingers lie at residues 20-43 (LTCP…QMFH), 65-87 (FICE…RSVH), and 93-116 (YVCK…LKHH). Disordered stretches follow at residues 136–158 (KIVT…TATP), 298–319 (SPDT…PPMA), and 342–383 (ASGQ…CPSP). The segment covering 142–158 (NGPTTNGSTPTTSTATP) has biased composition (low complexity). Composition is skewed to polar residues over residues 351–360 (PDSTDTQKGC) and 370–379 (SDPSTSSGDS). The C2H2-type 4 zinc finger occupies 387–410 (LHCKECGTLVRKSSHLPIHMTMSH). The segment at 516–554 (RMEMSLSPIKPFQQRFSRERSSSSSVERSPSRERSRSPL) is disordered. Residues 544–554 (SPSRERSRSPL) show a composition bias toward basic and acidic residues.

In terms of tissue distribution, expressed mainly in body wall muscles and ventral cord motoneurons.

The protein localises to the nucleus. It localises to the nucleus speckle. In terms of biological role, plays a role in regulating synaptic function, probably by modulation of endocytosis. May be dispensable in muscle for normal locomotion. May be involved in post-transcriptional mRNA processing, in parallel with unc-75. This is Zinc finger protein syd-9 from Caenorhabditis elegans.